We begin with the raw amino-acid sequence, 140 residues long: Probable deoxyuridine 5'-triphosphate nucleotidohydrolase (140 aa).

Residues 62–64, 76–79, arginine 130, and 135–136 contribute to the substrate site; these read RSG, GVID, and FG.

Belongs to the dUTPase family. As to quaternary structure, homotrimer. It depends on Mg(2+) as a cofactor.

It carries out the reaction dUTP + H2O = dUMP + diphosphate + H(+). Its pathway is pyrimidine metabolism; dUMP biosynthesis; dUMP from dCTP (dUTP route): step 2/2. In terms of biological role, this enzyme is involved in nucleotide metabolism: it produces dUMP, the immediate precursor of thymidine nucleotides and it decreases the intracellular concentration of dUTP so that uracil cannot be incorporated into DNA. The chain is Probable deoxyuridine 5'-triphosphate nucleotidohydrolase from Schizosaccharomyces pombe (strain 972 / ATCC 24843) (Fission yeast).